We begin with the raw amino-acid sequence, 88 residues long: MDGFDKTMKFSIQDEKQSVHVNDVLLTVYDALQEKGYNPINQIVGYLLSGDPAYIPRHKDARNIIRKLERDELIEELVKSYLKQHREE.

This sequence belongs to the UPF0297 family.

The sequence is that of UPF0297 protein Bcer98_3100 from Bacillus cytotoxicus (strain DSM 22905 / CIP 110041 / 391-98 / NVH 391-98).